The primary structure comprises 333 residues: Putative F-box protein At4g11580 (333 aa).

In terms of domain architecture, F-box spans 11-58; sequence VSEWADLNKDILELIFNKLDVMDITMGASRVCISWFLASHNKTLWNTV.

The protein is Putative F-box protein At4g11580 of Arabidopsis thaliana (Mouse-ear cress).